Consider the following 331-residue polypeptide: Adenosine deaminase (331 aa).

Residues His-12 and His-14 each contribute to the Zn(2+) site. 3 residues coordinate substrate: His-14, Asp-16, and Gly-170. Position 197 (His-197) interacts with Zn(2+). Glu-200 functions as the Proton donor in the catalytic mechanism. Asp-278 provides a ligand contact to Zn(2+).

Belongs to the metallo-dependent hydrolases superfamily. Adenosine and AMP deaminases family. Adenosine deaminase subfamily. Zn(2+) is required as a cofactor.

The enzyme catalyses adenosine + H2O + H(+) = inosine + NH4(+). The catalysed reaction is 2'-deoxyadenosine + H2O + H(+) = 2'-deoxyinosine + NH4(+). Catalyzes the hydrolytic deamination of adenosine and 2-deoxyadenosine. This is Adenosine deaminase from Shewanella woodyi (strain ATCC 51908 / MS32).